The following is a 56-amino-acid chain: UPF0391 membrane protein Noc_0484 (56 aa).

2 helical membrane-spanning segments follow: residues 6–26 and 29–49; these read VTFL…IAGI and EIAW…LVLG.

The protein belongs to the UPF0391 family.

It is found in the cell membrane. The polypeptide is UPF0391 membrane protein Noc_0484 (Nitrosococcus oceani (strain ATCC 19707 / BCRC 17464 / JCM 30415 / NCIMB 11848 / C-107)).